The chain runs to 336 residues: uncharacterized protein (336 aa).

Residues 123 to 323 (KTLMRDSGVP…YSSLINGILD (201 aa)) form the ATP-grasp domain.

The protein belongs to the D-alanine--D-alanine ligase family.

Could be involved in the biosynthesis of a cell wall component. This is an uncharacterized protein from Sinorhizobium fredii (strain NBRC 101917 / NGR234).